The chain runs to 411 residues: Phosphoglycerate kinase (411 aa).

Substrate contacts are provided by residues 28–30 (DIN), Arg45, 68–71 (HQSR), Arg125, and Arg165. ATP contacts are provided by residues Glu338 and 364-367 (GGHL).

The protein belongs to the phosphoglycerate kinase family. As to quaternary structure, homodimer.

It is found in the cytoplasm. It catalyses the reaction (2R)-3-phosphoglycerate + ATP = (2R)-3-phospho-glyceroyl phosphate + ADP. Its pathway is carbohydrate degradation; glycolysis; pyruvate from D-glyceraldehyde 3-phosphate: step 2/5. This is Phosphoglycerate kinase (pgk) from Methanothermobacter thermautotrophicus (strain ATCC 29096 / DSM 1053 / JCM 10044 / NBRC 100330 / Delta H) (Methanobacterium thermoautotrophicum).